Reading from the N-terminus, the 295-residue chain is Succinate dehydrogenase [ubiquinone] iron-sulfur subunit, mitochondrial (295 aa).

Positions 67–144 (EKPRLQSYTL…DTKIYPLPHM (78 aa)) constitute a 2Fe-2S ferredoxin-type domain. C106, C111, C114, and C126 together coordinate [2Fe-2S] cluster. The region spanning 185-215 (ERRRLDGLYECILCACCSTSCPSYWWNQDEY) is the 4Fe-4S ferredoxin-type domain. C195, C198, and C201 together coordinate [4Fe-4S] cluster. C205 lines the [3Fe-4S] cluster pocket. Residue W210 participates in a ubiquinone binding. C252 and C258 together coordinate [3Fe-4S] cluster. C262 is a binding site for [4Fe-4S] cluster.

This sequence belongs to the succinate dehydrogenase/fumarate reductase iron-sulfur protein family. Component of complex II composed of four subunits: a flavoprotein (FP), an iron-sulfur protein (IP), and a cytochrome b composed of a large and a small subunit. It depends on [2Fe-2S] cluster as a cofactor. The cofactor is [3Fe-4S] cluster. [4Fe-4S] cluster is required as a cofactor.

Its subcellular location is the mitochondrion inner membrane. It carries out the reaction a quinone + succinate = fumarate + a quinol. Its pathway is carbohydrate metabolism; tricarboxylic acid cycle; fumarate from succinate (eukaryal route): step 1/1. Iron-sulfur protein (IP) subunit of succinate dehydrogenase (SDH) that is involved in complex II of the mitochondrial electron transport chain and is responsible for transferring electrons from succinate to ubiquinone (coenzyme Q). The chain is Succinate dehydrogenase [ubiquinone] iron-sulfur subunit, mitochondrial (SDH2) from Mycosarcoma maydis (Corn smut fungus).